The sequence spans 262 residues: Pyridoxine 5'-phosphate synthase (262 aa).

A 3-amino-2-oxopropyl phosphate-binding site is contributed by asparagine 6. Residue 8–9 (DH) participates in 1-deoxy-D-xylulose 5-phosphate binding. Arginine 17 is a 3-amino-2-oxopropyl phosphate binding site. Catalysis depends on histidine 43, which acts as the Proton acceptor. 1-deoxy-D-xylulose 5-phosphate is bound by residues arginine 45 and histidine 50. The active-site Proton acceptor is the glutamate 70. Residue threonine 102 coordinates 1-deoxy-D-xylulose 5-phosphate. The active-site Proton donor is the histidine 215. 3-amino-2-oxopropyl phosphate-binding positions include glycine 216 and 237–238 (GH).

Belongs to the PNP synthase family. Homooctamer; tetramer of dimers.

Its subcellular location is the cytoplasm. The enzyme catalyses 3-amino-2-oxopropyl phosphate + 1-deoxy-D-xylulose 5-phosphate = pyridoxine 5'-phosphate + phosphate + 2 H2O + H(+). The protein operates within cofactor biosynthesis; pyridoxine 5'-phosphate biosynthesis; pyridoxine 5'-phosphate from D-erythrose 4-phosphate: step 5/5. Functionally, catalyzes the complicated ring closure reaction between the two acyclic compounds 1-deoxy-D-xylulose-5-phosphate (DXP) and 3-amino-2-oxopropyl phosphate (1-amino-acetone-3-phosphate or AAP) to form pyridoxine 5'-phosphate (PNP) and inorganic phosphate. The protein is Pyridoxine 5'-phosphate synthase of Helicobacter acinonychis (strain Sheeba).